The primary structure comprises 155 residues: Small ribosomal subunit protein uS7c (155 aa).

It belongs to the universal ribosomal protein uS7 family. As to quaternary structure, part of the 30S ribosomal subunit.

It is found in the plastid. The protein resides in the chloroplast. In terms of biological role, one of the primary rRNA binding proteins, it binds directly to 16S rRNA where it nucleates assembly of the head domain of the 30S subunit. This is Small ribosomal subunit protein uS7c (rps7) from Houttuynia cordata (Chameleon plant).